The chain runs to 362 residues: Chorismate synthase (362 aa).

Arginine 47 contributes to the NADP(+) binding site. FMN-binding positions include 124-126, glycine 286, 301-305, and arginine 327; these read RSS and KPTAT.

Belongs to the chorismate synthase family. Homotetramer. FMNH2 is required as a cofactor.

The catalysed reaction is 5-O-(1-carboxyvinyl)-3-phosphoshikimate = chorismate + phosphate. It participates in metabolic intermediate biosynthesis; chorismate biosynthesis; chorismate from D-erythrose 4-phosphate and phosphoenolpyruvate: step 7/7. In terms of biological role, catalyzes the anti-1,4-elimination of the C-3 phosphate and the C-6 proR hydrogen from 5-enolpyruvylshikimate-3-phosphate (EPSP) to yield chorismate, which is the branch point compound that serves as the starting substrate for the three terminal pathways of aromatic amino acid biosynthesis. This reaction introduces a second double bond into the aromatic ring system. The protein is Chorismate synthase of Synechococcus elongatus (strain ATCC 33912 / PCC 7942 / FACHB-805) (Anacystis nidulans R2).